We begin with the raw amino-acid sequence, 1045 residues long: MNWPFFRTAAVLFIFLVVLEVNSEFRIQVRDYNTKNGTIKWHSIRRQKREWIKFAAACREGEDNSKRNPIAKIHSDCAANQQVTYRISGVGIDQPPYGIFVINQKTGEINITSIVDREVTPFFIIYCRALNAQGQDLERPLELRVRVLDINDNPPVFSMSTFLGQIEENSNANTLVMRLNATDADEPNNLNSKIAFKIIRQEPSDSPMFIINRYTGEIRTMNNFLDREQYSQYSLAVRGSDRDGGADGMSAECECSIKILDVNDNIPYMELPSNSLQIEENSLNSNLLQIRVIDLDEEFSANWLAVIFFISGNEGGWFDIEMNERTNVGTLKIVKPLDYEEVKNLQLSLGVRNKAEFHQSIMSQYKLTATAISVTVLNVIEGSVFRPGSKTYVVTSSMGQNYKLGEFIATDLDTGLPSTTVRYVMGNNPTDLLAIDSKTGIITLRNKVTREQYNLLGKKYQGTILSIDDALQRTCTGTINIDLEGSGWEDRQTDGAVTGGGTITSTNDFTPSYEYTTTNTEDVYSVTPTGNGVRVRHPLDNVHFGPAGIGLLIMGFLVLGLVPFLLMYCDCGGAPGGGAGFEPVPECSDGAIHSWAVEGAQPERADLTTICVPQVPPDNANIIECIDNSGVYTNEYCGREMQELGGGERTTGFELIDGGKISGAPEICQEHSGTLRRNSMRECREGGLNMNFMESYFCQKAYAYADEDEGRPSNDCLLIYDIEGEGSPAGSVGCCSFIGEDLDDSFLDTLGPKFKKLADISLGKETEPYPDPDPSWPPQSTDPICPPQGTEPIGSGHPPISPHIGTTTVISESTYPSGPGVHHPMPIPDPLSYGNVTMTESYTTSGILKPSVHVHDNRQASNVVVTERVVGPISGANLHGMLEMPDLRDGSNVIVTERVIAPNSSLPTTLTIPDPRESSNVVVTERVIRPTSGIVGNLSMHPDISNTHNVIVTERVVSGSGITGISGGSGMGSSGLVGSTAGVGGDGLGLSSLGGGGLSSGIGGTATIGHLRGSSEHHFSNTLGSASPTTTRSRITKYSTVQYTK.

A signal peptide spans 1-23; that stretch reads MNWPFFRTAAVLFIFLVVLEVNS. Residues 24–49 constitute a propeptide that is removed on maturation; sequence EFRIQVRDYNTKNGTIKWHSIRRQKR. Residues N36, N110, and N180 are each glycosylated (N-linked (GlcNAc...) asparagine). Cadherin domains lie at 50-158, 159-270, 271-385, and 386-496; these read EWIK…PVFS, MSTF…PYME, LPSN…GSVF, and RPGS…TDGA. Over 50-546 the chain is Extracellular; that stretch reads EWIKFAAACR…HPLDNVHFGP (497 aa). Residues 547-567 traverse the membrane as a helical segment; it reads AGIGLLIMGFLVLGLVPFLLM. The Cytoplasmic portion of the chain corresponds to 568 to 1045; it reads YCDCGGAPGG…TKYSTVQYTK (478 aa). 5 Desmoglein repeat repeats span residues 814–840, 841–870, 871–900, 901–928, and 929–957; these read TYPS…TMTE, SYTT…ERVV, GPIS…ERVI, APNS…ERVI, and RPTS…ERVV. The disordered stretch occupies residues 1019 to 1045; it reads FSNTLGSASPTTTRSRITKYSTVQYTK. Over residues 1020–1045 the composition is skewed to polar residues; that stretch reads SNTLGSASPTTTRSRITKYSTVQYTK.

In terms of assembly, binds to JUP/plakoglobin. Interacts with PKP2. Interacts with DSC3; there is evidence to suggest that the interaction promotes cell-cell adhesion of keratinocytes.

Its subcellular location is the cell membrane. The protein resides in the cell junction. The protein localises to the desmosome. It localises to the cytoplasm. It is found in the nucleus. Its function is as follows. Component of intercellular desmosome junctions. Involved in the interaction of plaque proteins and intermediate filaments mediating cell-cell adhesion. The sequence is that of Desmoglein-1 (DSG1) from Sus scrofa (Pig).